The chain runs to 454 residues: Cathepsin C (454 aa).

An N-terminal signal peptide occupies residues 1–20 (MHWVFHCILIILACLRFTCA). Positions 21-217 (DTPANCTYED…SKELISLTGN (197 aa)) are excised as a propeptide. Asn-25 carries an N-linked (GlcNAc...) asparagine glycan. Intrachain disulfides connect Cys-26-Cys-107, Cys-244-Cys-287, and Cys-280-Cys-321. Cys-247 is a catalytic residue. Asn-265 is a glycosylation site (N-linked (GlcNAc...) asparagine). Phe-291 lines the chloride pocket. A glycan (N-linked (GlcNAc...) asparagine) is linked at Asn-326. Chloride is bound at residue Tyr-337. Active-site residues include His-398 and Asn-420.

Belongs to the peptidase C1 family. Chloride serves as cofactor.

It localises to the lysosome. Functionally, thiol protease. Has a role as a digestive enzyme. This Schistosoma mansoni (Blood fluke) protein is Cathepsin C.